The sequence spans 478 residues: ATP-dependent DNA helicase RecQ (478 aa).

Residues 28–202 (IDCLLARRDC…VEGLNLRSPE (175 aa)) enclose the Helicase ATP-binding domain. ATP is bound at residue 41–48 (LPTGGGKS). The short motif at 142–145 (DEAH) is the DEAH box element. One can recognise a Helicase C-terminal domain in the interval 229 to 380 (QLRRFLLKHL…RAEVLSQQIP (152 aa)). 4 residues coordinate Zn(2+): C447, C467, C470, and C473.

Belongs to the helicase family. RecQ subfamily. Mg(2+) serves as cofactor. It depends on Zn(2+) as a cofactor.

The enzyme catalyses Couples ATP hydrolysis with the unwinding of duplex DNA by translocating in the 3'-5' direction.. It carries out the reaction ATP + H2O = ADP + phosphate + H(+). Functionally, an ATP-dependent DNA helicase which unwinds DNA in a 3'-5' direction. In Synechocystis sp. (strain ATCC 27184 / PCC 6803 / Kazusa), this protein is ATP-dependent DNA helicase RecQ.